Reading from the N-terminus, the 492-residue chain is N-succinylglutamate 5-semialdehyde dehydrogenase (492 aa).

220–225 (GSANTG) contacts NAD(+). Active-site residues include Glu243 and Cys277.

Belongs to the aldehyde dehydrogenase family. AstD subfamily.

It catalyses the reaction N-succinyl-L-glutamate 5-semialdehyde + NAD(+) + H2O = N-succinyl-L-glutamate + NADH + 2 H(+). It participates in amino-acid degradation; L-arginine degradation via AST pathway; L-glutamate and succinate from L-arginine: step 4/5. Its function is as follows. Catalyzes the NAD-dependent reduction of succinylglutamate semialdehyde into succinylglutamate. This Escherichia coli (strain ATCC 8739 / DSM 1576 / NBRC 3972 / NCIMB 8545 / WDCM 00012 / Crooks) protein is N-succinylglutamate 5-semialdehyde dehydrogenase.